Reading from the N-terminus, the 490-residue chain is UDP-N-acetylmuramate--L-alanine ligase (490 aa).

122-128 (GTHGKTS) contributes to the ATP binding site.

The protein belongs to the MurCDEF family.

The protein localises to the cytoplasm. It catalyses the reaction UDP-N-acetyl-alpha-D-muramate + L-alanine + ATP = UDP-N-acetyl-alpha-D-muramoyl-L-alanine + ADP + phosphate + H(+). Its pathway is cell wall biogenesis; peptidoglycan biosynthesis. In terms of biological role, cell wall formation. This chain is UDP-N-acetylmuramate--L-alanine ligase, found in Mycobacteroides abscessus (strain ATCC 19977 / DSM 44196 / CCUG 20993 / CIP 104536 / JCM 13569 / NCTC 13031 / TMC 1543 / L948) (Mycobacterium abscessus).